A 382-amino-acid polypeptide reads, in one-letter code: Anhydro-N-acetylmuramic acid kinase (382 aa).

Residue 9–16 (GTSLDGID) participates in ATP binding.

The protein belongs to the anhydro-N-acetylmuramic acid kinase family.

It carries out the reaction 1,6-anhydro-N-acetyl-beta-muramate + ATP + H2O = N-acetyl-D-muramate 6-phosphate + ADP + H(+). It functions in the pathway amino-sugar metabolism; 1,6-anhydro-N-acetylmuramate degradation. Its pathway is cell wall biogenesis; peptidoglycan recycling. Functionally, catalyzes the specific phosphorylation of 1,6-anhydro-N-acetylmuramic acid (anhMurNAc) with the simultaneous cleavage of the 1,6-anhydro ring, generating MurNAc-6-P. Is required for the utilization of anhMurNAc either imported from the medium or derived from its own cell wall murein, and thus plays a role in cell wall recycling. This Bacillus cereus (strain AH820) protein is Anhydro-N-acetylmuramic acid kinase.